We begin with the raw amino-acid sequence, 248 residues long: PF03932 family protein CutC (248 aa).

It belongs to the CutC family. As to quaternary structure, homodimer.

It is found in the cytoplasm. This is PF03932 family protein CutC from Shigella boydii serotype 4 (strain Sb227).